The sequence spans 404 residues: MNQADLTERSDALQEQILNLYEQDSKDIQAQIQYWDLNRKLYVTYYYARKEGYSHLGLQPLPALQVSEYKAKQAIEMGLLLTSLSKSQYASELWGLTDTSAELLLTPPRNTFKKKGYTVNVWFDNNENNTFPYTNWEYIYYQDDIEQWHRTRGEVDYNGLYFTENNGNRAYFLLFDSDAQTYSQTGTWTVHYKNQIISAPVTSSSKQSSDDYTSKAGQQPHFFASSSSPTTTDGGQTSQEGVSSSTTSPSAVRLRRRRSNEQQRELSSRESPRTKRRRVPDEVDRQSAVGSAPTAEEVGSRHRSLPRSGISRLARLQGEARDPPILLIKGLANSLKCWRYRLKKYTRYFKCMSTVFRWVDIDVPESSRHKLLVVFNDTTQRDVFMKLVTLPRGCTYTFGTLNSL.

Residues 1–204 are transactivation domain; the sequence is MNQADLTERS…QIISAPVTSS (204 aa). The tract at residues 201-306 is disordered; it reads VTSSSKQSSD…EVGSRHRSLP (106 aa). The segment covering 224-250 has biased composition (polar residues); it reads ASSSSPTTTDGGQTSQEGVSSSTTSPS. The span at 259-285 shows a compositional bias: basic and acidic residues; it reads SNEQQRELSSRESPRTKRRRVPDEVDR. The segment at 322–404 is DNA-binding domain; sequence DPPILLIKGL…TYTFGTLNSL (83 aa). Residue lysine 329 forms a Glycyl lysine isopeptide (Lys-Gly) (interchain with G-Cter in SUMO) linkage.

The protein belongs to the papillomaviridae E2 protein family. In terms of assembly, binds DNA as homodimer. Interacts with protein E1; this interaction greatly increases E1 DNA-binding activity. Interacts with protein L1; this interaction enhances E2-dependent replication and transcription activation. Interacts with protein L2; this interaction inhibits E2 transcriptional activity but not DNA replication function E2. Interacts with protein E7; this interaction inhibits E7 oncogenic activity. Interacts with host TAF1; this interaction modulates E2-dependent transcriptional regulation. Interacts with host BRD4; this interaction mediates E2 transcriptional activation function. Additionally, the interaction with host BRD4 on mitotic chromosomes mediates tethering of the viral genome. Interacts with host TOPBP1; this interaction is required for optimal viral DNA replication. In terms of processing, phosphorylated. Post-translationally, sumoylation plays a regulatory role in E2 transcriptional activity.

The protein localises to the host nucleus. In terms of biological role, plays a role in the initiation of viral DNA replication. A dimer of E2 interacts with a dimer of E1 in order to improve specificity of E1 DNA binding activity. Once the complex recognizes and binds DNA at specific sites, the E2 dimer is removed from DNA. E2 also regulates viral transcription through binding to the E2RE response element (5'-ACCNNNNNNGGT-3') present in multiple copies in the regulatory regions of the viral genome. Activates or represses transcription depending on E2RE's position with regards to proximal promoter elements including the TATA-box. Repression occurs by sterically hindering the assembly of the transcription initiation complex. This chain is Regulatory protein E2, found in Homo sapiens (Human).